Here is a 610-residue protein sequence, read N- to C-terminus: Pyruvate decarboxylase 1 (610 aa).

The substrate site is built by Asp72 and His159. Residues 437–519 (DSWFNCQKLR…FLINNGGYTI (83 aa)) form a thiamine pyrophosphate binding region. Residues Asp487, Asn514, and Gly516 each contribute to the Mg(2+) site. Glu520 contributes to the substrate binding site.

It belongs to the TPP enzyme family. In terms of assembly, homotetramer. A metal cation serves as cofactor. Requires thiamine diphosphate as cofactor.

It carries out the reaction a 2-oxocarboxylate + H(+) = an aldehyde + CO2. The protein is Pyruvate decarboxylase 1 (PDC1) of Zea mays (Maize).